The chain runs to 198 residues: SCO2-like protein RF_0043 (198 aa).

This sequence belongs to the SCO1/2 family.

In Rickettsia felis (strain ATCC VR-1525 / URRWXCal2) (Rickettsia azadi), this protein is SCO2-like protein RF_0043.